The sequence spans 236 residues: 2-C-methyl-D-erythritol 4-phosphate cytidylyltransferase (236 aa).

The protein belongs to the IspD/TarI cytidylyltransferase family. IspD subfamily. In terms of assembly, homodimer.

It carries out the reaction 2-C-methyl-D-erythritol 4-phosphate + CTP + H(+) = 4-CDP-2-C-methyl-D-erythritol + diphosphate. The protein operates within isoprenoid biosynthesis; isopentenyl diphosphate biosynthesis via DXP pathway; isopentenyl diphosphate from 1-deoxy-D-xylulose 5-phosphate: step 2/6. Catalyzes the formation of 4-diphosphocytidyl-2-C-methyl-D-erythritol from CTP and 2-C-methyl-D-erythritol 4-phosphate (MEP). This Buchnera aphidicola subsp. Schizaphis graminum (strain Sg) protein is 2-C-methyl-D-erythritol 4-phosphate cytidylyltransferase.